Consider the following 66-residue polypeptide: Large ribosomal subunit protein bL35 (66 aa).

Residues 1 to 26 (MPKMKTHRGSAKRFKKTGSGKLKRSH) are compositionally biased toward basic residues. The interval 1–48 (MPKMKTHRGSAKRFKKTGSGKLKRSHAYTSHLFANKSQKQKRKLRKSA) is disordered.

It belongs to the bacterial ribosomal protein bL35 family. Part of the 50S ribosomal subunit.

This Bacillus subtilis (strain 168) protein is Large ribosomal subunit protein bL35.